The following is a 326-amino-acid chain: DNA-directed RNA polymerase subunit alpha (326 aa).

Residues 1-231 (MQTALLKPKI…DQLSVFAALE (231 aa)) are alpha N-terminal domain (alpha-NTD). Residues 247 to 326 (IDPILLRPVD…ENWPPAGLDK (80 aa)) form an alpha C-terminal domain (alpha-CTD) region.

Belongs to the RNA polymerase alpha chain family. As to quaternary structure, homodimer. The RNAP catalytic core consists of 2 alpha, 1 beta, 1 beta' and 1 omega subunit. When a sigma factor is associated with the core the holoenzyme is formed, which can initiate transcription.

The enzyme catalyses RNA(n) + a ribonucleoside 5'-triphosphate = RNA(n+1) + diphosphate. DNA-dependent RNA polymerase catalyzes the transcription of DNA into RNA using the four ribonucleoside triphosphates as substrates. The chain is DNA-directed RNA polymerase subunit alpha from Cupriavidus pinatubonensis (strain JMP 134 / LMG 1197) (Cupriavidus necator (strain JMP 134)).